We begin with the raw amino-acid sequence, 552 residues long: Glutamine--tRNA ligase (552 aa).

Residues 34–44 carry the 'HIGH' region motif; the sequence is PEPNGYLHIGH. ATP contacts are provided by residues 35-37 and 41-47; these read EPN and HIGHAKS. 2 residues coordinate L-glutamine: Asp-67 and Tyr-212. ATP-binding positions include Thr-231, 261–262, and 269–271; these read RL and MSK. Residues 268-272 carry the 'KMSKS' region motif; it reads IMSKR.

It belongs to the class-I aminoacyl-tRNA synthetase family. In terms of assembly, monomer.

It localises to the cytoplasm. The catalysed reaction is tRNA(Gln) + L-glutamine + ATP = L-glutaminyl-tRNA(Gln) + AMP + diphosphate. The protein is Glutamine--tRNA ligase of Aliivibrio salmonicida (strain LFI1238) (Vibrio salmonicida (strain LFI1238)).